The sequence spans 634 residues: Phospholipase B (634 aa).

The signal sequence occupies residues 1–19 (MSIITTAFALSLLATTAFA). The region spanning 46–569 (DCPSNVTWIR…DTWCWAGDDN (524 aa)) is the PLA2c domain. N-linked (GlcNAc...) asparagine glycans are attached at residues Asn50, Asn56, Asn122, Asn231, Asn246, Asn269, Asn311, Asn340, Asn384, Asn430, Asn478, Asn498, Asn525, Asn550, Asn569, Asn591, and Asn603.

This sequence belongs to the lysophospholipase family. Post-translationally, N-glycosylated.

It is found in the secreted. It catalyses the reaction a 1-acyl-sn-glycero-3-phosphocholine + H2O = sn-glycerol 3-phosphocholine + a fatty acid + H(+). Its function is as follows. Exhibits phospholipase B (PLB), lysophospholipase (LPL) and lysophospholipase/transacylase (LPTA) activities. The chain is Phospholipase B (PLB1) from Cryptococcus neoformans var. neoformans serotype D (strain JEC21 / ATCC MYA-565) (Filobasidiella neoformans).